Consider the following 244-residue polypeptide: Phosphoribosyl isomerase A (244 aa).

The Proton acceptor role is filled by aspartate 10. Aspartate 129 functions as the Proton donor in the catalytic mechanism.

The protein belongs to the HisA/HisF family.

It is found in the cytoplasm. The enzyme catalyses 1-(5-phospho-beta-D-ribosyl)-5-[(5-phospho-beta-D-ribosylamino)methylideneamino]imidazole-4-carboxamide = 5-[(5-phospho-1-deoxy-D-ribulos-1-ylimino)methylamino]-1-(5-phospho-beta-D-ribosyl)imidazole-4-carboxamide. It catalyses the reaction N-(5-phospho-beta-D-ribosyl)anthranilate = 1-(2-carboxyphenylamino)-1-deoxy-D-ribulose 5-phosphate. The protein operates within amino-acid biosynthesis; L-histidine biosynthesis; L-histidine from 5-phospho-alpha-D-ribose 1-diphosphate: step 4/9. It functions in the pathway amino-acid biosynthesis; L-tryptophan biosynthesis; L-tryptophan from chorismate: step 3/5. Involved in both the histidine and tryptophan biosynthetic pathways. The chain is Phosphoribosyl isomerase A from Mycobacterium ulcerans (strain Agy99).